Reading from the N-terminus, the 87-residue chain is U3-theraphotoxin-Hhn1a 18 (87 aa).

The N-terminal stretch at 1-24 is a signal peptide; the sequence is MVNTKASMFLTFAGLVLLFVVCYA. Residues 25–52 constitute a propeptide that is removed on maturation; sequence SESEEKEFPKEMLSSIFAVDNDFKQEER. Intrachain disulfides connect cysteine 54-cysteine 67, cysteine 61-cysteine 72, and cysteine 66-cysteine 79.

It belongs to the neurotoxin 10 (Hwtx-1) family. 51 (Hntx-8) subfamily. Hntx-8 sub-subfamily. As to expression, expressed by the venom gland.

It localises to the secreted. Ion channel inhibitor. In Cyriopagopus hainanus (Chinese bird spider), this protein is U3-theraphotoxin-Hhn1a 18.